Consider the following 511-residue polypeptide: Trigger factor (511 aa).

One can recognise a PPIase FKBP-type domain in the interval 168 to 253 (GDLLTIDFVG…VKEVKAPAEV (86 aa)). The segment at 446–511 (DEHEHHHHDH…KAPAKKKKED (66 aa)) is disordered. Residues 455 to 478 (HDHDHDHDHDHDHGHDHDHGDEKP) show a composition bias toward basic and acidic residues. Basic residues predominate over residues 479–488 (KKKPAAKKAA). Residues 489–498 (AKSDDGEAKP) show a composition bias toward basic and acidic residues. Basic residues predominate over residues 499-511 (AAKKAPAKKKKED).

It belongs to the FKBP-type PPIase family. Tig subfamily.

Its subcellular location is the cytoplasm. The enzyme catalyses [protein]-peptidylproline (omega=180) = [protein]-peptidylproline (omega=0). Its function is as follows. Involved in protein export. Acts as a chaperone by maintaining the newly synthesized protein in an open conformation. Functions as a peptidyl-prolyl cis-trans isomerase. The sequence is that of Trigger factor from Parvibaculum lavamentivorans (strain DS-1 / DSM 13023 / NCIMB 13966).